Consider the following 306-residue polypeptide: Tricarboxylate transporter FUM11 (306 aa).

3 Solcar repeats span residues 18–98 (SDTL…YQKL), 109–195 (FGIL…LKQV), and 206–292 (IGTV…VVEG). 6 helical membrane passes run 24–44 (LVAGSVAGGLEIAITYPAEFA), 67–87 (GLQWYSGCIPFLIGNSVKTSI), 113–133 (LAGFGAGATESLLAVTPSERI), 170–189 (GFWPTTARQSAGSAIRLGSY), 209–229 (VKTFIIGSLAGLITVYLTQPL), and 267–286 (GAVARSLRLVMSGGIVFMVY).

Belongs to the mitochondrial carrier (TC 2.A.29) family.

The protein resides in the mitochondrion inner membrane. It participates in mycotoxin biosynthesis. In terms of biological role, tricarboxylate transporter; part of the gene cluster that mediates the biosynthesis of fumonisins B1 (FB1), B2 (FB2), B3 (FB3), and B4 (FB4), which are carcinogenic mycotoxins. Within the pathway, FUM11 is involved the addition of the tricarballylic moieties to the carbon backbone. FUM11 makes a tricarboxylic acid precursor available for fumonisin biosynthesis via its export from the mitochondria. The biosynthesis starts with the FUM1-catalyzed carbon chain assembly from one molecule of acetyl-CoA, eight molecules of malonyl-CoA, and two molecules of methionine (in S-adenosyl form). The C18 polyketide chain is released from the enzyme by a nucleophilic attack of a carbanion, which is derived from R-carbon of alanine by decarboxylation, on the carbonyl carbon of polyketide acyl chain. This step is catalyzed by the pyridoxal 5'-phosphate-dependent aminoacyl transferase FUM8. The resultant 3-keto intermediate is then stereospecifically reduced to a 3-hydroxyl product by reductase FUM13. Subsequent oxidations at C-10 by the cytochrome P450 monooxygenase FUM2, C-14 and C-15 by FUM6, FUM12 or FUM15, tricarballylic esterification of the hydroxyl groups on C-14 and C-15 by acyltransferase FUM14, and C-5 hydroxylation by 2-keto-glutarate-dependent dioxygenase FUM3 furnish the biosynthesis of fumonisins. The tricarballylic moieties are most likely derived from the citric acid cycle, and their addition to the carbon backbone may involve FUM7, FUM10, FUM11 and FUM14. The protein is Tricarboxylate transporter FUM11 of Gibberella moniliformis (strain M3125 / FGSC 7600) (Maize ear and stalk rot fungus).